Here is a 20-residue protein sequence, read N- to C-terminus: Unknown protein NF028 from 2D-PAGE (20 aa).

The chain is Unknown protein NF028 from 2D-PAGE from Naegleria fowleri (Brain eating amoeba).